The sequence spans 493 residues: Dipeptide permease D (493 aa).

A run of 13 helical transmembrane segments spans residues 14-34 (VVAL…LLIL), 49-69 (ELFS…GYLA), 91-111 (LVLG…AIIV), 138-158 (GGFS…PIAC), 167-187 (WAMG…IFLC), 212-232 (NWGW…VLFW), 235-255 (WSVY…AKIY), 267-287 (LGLI…AQQG), 312-332 (MFQS…AWLV), 344-364 (IWGK…ILTL), 379-399 (LMVL…PVAM), 413-433 (VLTG…AGVI), and 458-478 (VFEQ…LIWL).

This sequence belongs to the major facilitator superfamily. Proton-dependent oligopeptide transporter (POT/PTR) (TC 2.A.17) family. DtpD subfamily.

It localises to the cell inner membrane. In terms of biological role, probable proton-dependent permease that transports dipeptides. This chain is Dipeptide permease D, found in Salmonella typhimurium (strain 14028s / SGSC 2262).